The sequence spans 950 residues: Voltage-gated inwardly rectifying potassium channel KCNH6 (950 aa).

Topologically, residues 1–261 are cytoplasmic; sequence MPVRRGHVAP…YSPFKAVWDW (261 aa). Residues 41-70 form the PAS domain; the sequence is IIYCNDGFCELFGYSRVEVMQRPCTCDFLT. Residues 92–144 enclose the PAC domain; the sequence is CKVDILYYRKDASSFRCLVDVVPVKNEDGAVIMFILNFEDLAQLLAKSSSRSL. Residues 154 to 174 are disordered; that stretch reads LGSEGSHSRPSGQGPGPGRGK. Residues 262–282 traverse the membrane as a helical segment; sequence LILLLVIYTAVFTPYSAAFLL. Residues 283–298 lie on the Extracellular side of the membrane; that stretch reads SDQDESQRGTCGYTCS. A helical transmembrane segment spans residues 299–319; sequence PLTVVDLIVDIMFVVDIVINF. At 320–340 the chain is on the cytoplasmic side; sequence RTTYVNTNDEVVSHPRRIAVH. A helical membrane pass occupies residues 341 to 361; that stretch reads YFKGWFLIDMVAAIPFDLLIF. Over 362–370 the chain is Extracellular; sequence RTGSDETTT. The chain crosses the membrane as a helical; Voltage-sensor span at residues 371–391; that stretch reads LIGLLKTARLLRLVRVARKLD. The Cytoplasmic segment spans residues 392–398; that stretch reads RYSEYGA. Residues 399-419 form a helical membrane-spanning segment; it reads AVLFLLMCTFALIAHWLACIW. The Extracellular segment spans residues 420-463; that stretch reads YAIGNVERPYLEPKIGWLDSLGAQLGKQYNGSDPASGPSVQDKY. The pore-forming intramembrane region spans 464–484; it reads VTALYFTFSSLTSVGFGNVSP. The Selectivity filter signature appears at 476 to 481; sequence SVGFGN. The Extracellular portion of the chain corresponds to 485 to 490; it reads NTNSEK. A helical membrane pass occupies residues 491–511; it reads VFSICVMLIGSLMYASIFGNV. The Cytoplasmic segment spans residues 512–950; the sequence is SAIIQRLYSG…HGSDPGFTRS (439 aa). Residues 594–694 are cNMP-binding domain; it reads AFRGASKGCL…IHRADLLEVL (101 aa). Disordered stretches follow at residues 719–750 and 890–950; these read GGLQ…APSL and VPSS…FTRS. Positions 740 to 750 are enriched in polar residues; it reads NDSQSGAAPSL. The span at 898 to 912 shows a compositional bias: low complexity; sequence PGGLLSPLASPLRPL.

Belongs to the potassium channel family. H (Eag) (TC 1.A.1.20) subfamily. Kv11.2/KCNH6 sub-subfamily. The potassium channel is probably composed of a homo- or heterotetrameric complex of pore-forming alpha subunits that can associate only within their subfamily. In terms of tissue distribution, highly expressed in celiac and superior mesenteric ganglia, but not detected in brain or in heart. Detected at low levels in retina. Also found in pituitary. Also found in the olfactory bulb (granular and mitral cell layers).

The protein localises to the cell membrane. The catalysed reaction is K(+)(in) = K(+)(out). In terms of biological role, pore-forming (alpha) subunit of voltage-gated inwardly rectifying potassium channel. Characterized by unusual gating kinetics by producing relatively small outward currents during membrane depolarization and large inward currents during subsequent repolarization which reflect a rapid inactivation during depolarization and quick recovery from inactivation but slow deactivation (closing) during repolarization. Activates even more slowly than KCNH2. This is Voltage-gated inwardly rectifying potassium channel KCNH6 from Rattus norvegicus (Rat).